The following is a 167-amino-acid chain: Alpha-crystallin A chain (167 aa).

Methionine 1 bears the N-acetylmethionine mark. The region spanning 47–158 (YYRQSFFRGF…GERPIPVSRE (112 aa)) is the sHSP domain. Zn(2+) contacts are provided by histidine 94, glutamate 96, histidine 101, and histidine 148. The segment at 143 to 167 (SLDSSHGERPIPVSREEKPTSAPSS) is disordered. Basic and acidic residues predominate over residues 147 to 161 (SHGERPIPVSREEKP). Serine 156 carries O-linked (GlcNAc) serine glycosylation.

Belongs to the small heat shock protein (HSP20) family. As to quaternary structure, heteropolymer composed of three CRYAA and one CRYAB subunits. Inter-subunit bridging via zinc ions enhances stability, which is crucial as there is no protein turn over in the lens. Can also form homodimers and homotetramers (dimers of dimers) which serve as the building blocks of homooligomers. Within homooligomers, the zinc-binding motif is created from residues of 3 different molecules. His-94 and Glu-96 from one molecule are ligands of the zinc ion, and His-101 and His-148 residues from additional molecules complete the site with tetrahedral coordination geometry.

Its subcellular location is the cytoplasm. The protein resides in the nucleus. Functionally, contributes to the transparency and refractive index of the lens. May act as a chaperone, preventing aggregation of various proteins under a wide range of stress conditions. This is Alpha-crystallin A chain (CRYAA) from Pelophylax lessonae (Pool frog).